Reading from the N-terminus, the 79-residue chain is M-myrmicitoxin(01)-Tb1a (79 aa).

The N-terminal stretch at 1–26 (MKLSFLSLVLAIILVMALMYTPHAEA) is a signal peptide. Positions 27–56 (KAWADADADATAAADADADAVADALADAVA) are excised as a propeptide. Val76 carries the post-translational modification Valine amide.

Belongs to the formicidae venom precursor-01 superfamily. The C-terminal amidation is important for antimicrobial activity, since a non-amidated synthetic peptide shows a reduced antimicrobial activity (2-20-fold depending on the strain tested). The amidation may play a positive role in the peptide conformation, since amidated peptide shows an increase of about 5% of helical content. Expressed by the venom gland.

The protein localises to the secreted. Its subcellular location is the target cell membrane. Antimicrobial peptide that shows antimicrobial activities against all microorganisms tested with minimal inhibitory concentrations (MICs) values ranging from 0.45 to 97.5 umol/L. This peptide kills the microorganisms by permeabilizating the membranes. It shows a very weak hemolytic activity (HC(50)=325 umol/L) and weak cytotoxicity against human lymphocytes (LC(50)=67.8 umol/L). Gram-negative bacteria tested are E.coli (MIC=24.4 umol/L), C.sakazakii (MIC=5.8 umol/L), P.aeruginosa (MIC=8.7-12.2 umol/L), S.enterica (MIC=5.4 umol/L), and H.pylori (MIC=0.99-3.9 umol/L). Gram-positive bacteria tested are E.hirae (MIC=12.2 umol/L), S.aureus (MIC=3.0-6.4 umol/L), methicillin-resistant S.aureus (MRSA) (MIC=8.7 umol/L), S.xylosus (MIC=0.45-1.3 umol/L), and B.subtilis (MIC=24.4 umol/L). Fungi tested are A.niger (MIC=0.75 umol/L), C.albicans (MIC=17.3 umol/L), G.candidum (MIC=97.5 umol/L), and S.cerevisiae (MIC=6.1 umol/L). Finally the parasite tested is L.infantum (MIC=1.5 umol/L). In Tetramorium bicarinatum (Tramp ant), this protein is M-myrmicitoxin(01)-Tb1a.